The primary structure comprises 924 residues: Isoleucine--tRNA ligase (924 aa).

The short motif at 57–67 (PYANGDIHMGH) is the 'HIGH' region element. E552 is an L-isoleucyl-5'-AMP binding site. The short motif at 593–597 (KMSKS) is the 'KMSKS' region element. K596 lines the ATP pocket. 4 residues coordinate Zn(2+): C891, C894, C911, and C914.

Belongs to the class-I aminoacyl-tRNA synthetase family. IleS type 1 subfamily. As to quaternary structure, monomer. Zn(2+) is required as a cofactor.

The protein localises to the cytoplasm. It carries out the reaction tRNA(Ile) + L-isoleucine + ATP = L-isoleucyl-tRNA(Ile) + AMP + diphosphate. Its function is as follows. Catalyzes the attachment of isoleucine to tRNA(Ile). As IleRS can inadvertently accommodate and process structurally similar amino acids such as valine, to avoid such errors it has two additional distinct tRNA(Ile)-dependent editing activities. One activity is designated as 'pretransfer' editing and involves the hydrolysis of activated Val-AMP. The other activity is designated 'posttransfer' editing and involves deacylation of mischarged Val-tRNA(Ile). The sequence is that of Isoleucine--tRNA ligase from Geobacillus kaustophilus (strain HTA426).